A 687-amino-acid polypeptide reads, in one-letter code: Dictomallein (687 aa).

Disordered stretches follow at residues 1–45 (MGNG…SRRL) and 73–112 (TAGG…STSA). In terms of domain architecture, Peptidase M66 spans 233-501 (PVFGTDADVQ…QAWIASRVLA (269 aa)). A Zn(2+)-binding site is contributed by His-393. Glu-394 is a catalytic residue. Zn(2+) contacts are provided by His-397 and His-403.

The protein belongs to the dictomallein family. The cofactor is Zn(2+).

The polypeptide is Dictomallein (dtmL) (Burkholderia mallei (strain NCTC 10247)).